A 78-amino-acid chain; its full sequence is MSRVCQVTGKKPMVGNNRSHAKNATRRRFLPNLQNHRFWLETEKRFVKLRISTKGMRIIDKKGIEVVVAELRARGEKV.

The tract at residues 1–21 (MSRVCQVTGKKPMVGNNRSHA) is disordered.

The protein belongs to the bacterial ribosomal protein bL28 family.

In Shewanella piezotolerans (strain WP3 / JCM 13877), this protein is Large ribosomal subunit protein bL28.